Here is a 449-residue protein sequence, read N- to C-terminus: Phosphoglucosamine mutase (449 aa).

Ser103 acts as the Phosphoserine intermediate in catalysis. Residues Ser103, Asp240, Asp242, and Asp244 each contribute to the Mg(2+) site. Phosphoserine is present on Ser103.

It belongs to the phosphohexose mutase family. Requires Mg(2+) as cofactor. Activated by phosphorylation.

The catalysed reaction is alpha-D-glucosamine 1-phosphate = D-glucosamine 6-phosphate. Functionally, catalyzes the conversion of glucosamine-6-phosphate to glucosamine-1-phosphate. This Thermobifida fusca (strain YX) protein is Phosphoglucosamine mutase.